A 283-amino-acid polypeptide reads, in one-letter code: MRYIGAHVSASGGVQNAPLNAAKIGANAFALFVKNQRQWSAKPLESAAISEFEQNCKAANISPRHILPHDSYLINLGHYDDAKREQSFNAFVDEIERVSELGLELLNFHPGSHLNEISQNECLNLIAECMNEALKRTDGVKLVIENTAGQGSNLGFRFEQLAYLIERTDDKSRVGVCIDTCHAFAAGYDLRTPEAYKKTMDEFDAVIGYEFLSAMHLNDCKFGLNSRKDRHESLGKGFLGLKAFECIMNDEHIGEIPMILETIDDSIWADEIKILRNLQKGKK.

Zn(2+)-binding residues include His69, His109, Glu145, Asp179, His182, His216, Asp229, His231, and Glu261.

The protein belongs to the AP endonuclease 2 family. The cofactor is Zn(2+).

It carries out the reaction Endonucleolytic cleavage to 5'-phosphooligonucleotide end-products.. Its function is as follows. Endonuclease IV plays a role in DNA repair. It cleaves phosphodiester bonds at apurinic or apyrimidinic (AP) sites, generating a 3'-hydroxyl group and a 5'-terminal sugar phosphate. This Campylobacter curvus (strain 525.92) protein is Probable endonuclease 4.